The sequence spans 360 residues: S-adenosylmethionine:tRNA ribosyltransferase-isomerase (360 aa).

The protein belongs to the QueA family. In terms of assembly, monomer.

The protein resides in the cytoplasm. The enzyme catalyses 7-aminomethyl-7-carbaguanosine(34) in tRNA + S-adenosyl-L-methionine = epoxyqueuosine(34) in tRNA + adenine + L-methionine + 2 H(+). It participates in tRNA modification; tRNA-queuosine biosynthesis. Transfers and isomerizes the ribose moiety from AdoMet to the 7-aminomethyl group of 7-deazaguanine (preQ1-tRNA) to give epoxyqueuosine (oQ-tRNA). The polypeptide is S-adenosylmethionine:tRNA ribosyltransferase-isomerase (Rhizobium rhizogenes (strain K84 / ATCC BAA-868) (Agrobacterium radiobacter)).